Consider the following 345-residue polypeptide: uncharacterized protein (345 aa).

The protein belongs to the methyltransferase superfamily.

This is an uncharacterized protein from Streptomyces fradiae (Streptomyces roseoflavus).